A 255-amino-acid polypeptide reads, in one-letter code: tRNA pseudouridine synthase A (255 aa).

Aspartate 43 functions as the Nucleophile in the catalytic mechanism. Tyrosine 94 lines the substrate pocket.

Belongs to the tRNA pseudouridine synthase TruA family.

It carries out the reaction uridine(38/39/40) in tRNA = pseudouridine(38/39/40) in tRNA. Functionally, formation of pseudouridine at positions 38, 39 and 40 in the anticodon stem and loop of transfer RNAs. This is tRNA pseudouridine synthase A from Pyrobaculum neutrophilum (strain DSM 2338 / JCM 9278 / NBRC 100436 / V24Sta) (Thermoproteus neutrophilus).